Consider the following 1415-residue polypeptide: DNA-directed RNA polymerase subunit beta' (1415 aa).

Zn(2+)-binding residues include Cys70, Cys72, Cys85, and Cys88. Residues Asp461, Asp463, and Asp465 each contribute to the Mg(2+) site. Positions 820, 894, 901, and 904 each coordinate Zn(2+). Residues 1382 to 1415 (ERERAQAIADEEQSLFIEPPPVVQATTEGEGDNA) are disordered.

Belongs to the RNA polymerase beta' chain family. In terms of assembly, the RNAP catalytic core consists of 2 alpha, 1 beta, 1 beta' and 1 omega subunit. When a sigma factor is associated with the core the holoenzyme is formed, which can initiate transcription. Mg(2+) is required as a cofactor. The cofactor is Zn(2+).

The enzyme catalyses RNA(n) + a ribonucleoside 5'-triphosphate = RNA(n+1) + diphosphate. Functionally, DNA-dependent RNA polymerase catalyzes the transcription of DNA into RNA using the four ribonucleoside triphosphates as substrates. The sequence is that of DNA-directed RNA polymerase subunit beta' from Cupriavidus pinatubonensis (strain JMP 134 / LMG 1197) (Cupriavidus necator (strain JMP 134)).